The chain runs to 716 residues: Protein Hook homolog 2 (716 aa).

The required for localization to the centrosome and induction of aggresome formation stretch occupies residues 1 to 161 (MSVDKAELCG…ELMTKDTPDS (161 aa)). Residues 1-546 (MSVDKAELCG…LKRKLEDHLQ (546 aa)) are sufficient for interaction with microtubules. The Calponin-homology (CH) domain maps to 6 to 122 (AELCGSLLTW…KLLQLVLGCA (117 aa)). Serine 163 is subject to Phosphoserine. Coiled-coil stretches lie at residues 188-427 (DHLQ…AQLQ) and 455-605 (AELR…VDKA). The interval 533-716 (DPTLLKRKLE…ALSLRPTDKH (184 aa)) is required for localization to the centrosome and induction of aggresome formation. The interval 582–716 (DSLQKKDADL…ALSLRPTDKH (135 aa)) is sufficient for interaction with CNTRL.

Belongs to the hook family. In terms of assembly, self-associates. Component of the FTS/Hook/FHIP complex (FHF complex), composed of AKTIP/FTS, FHIP1B, and one or more members of the Hook family of proteins HOOK1, HOOK2, and HOOK3. May interact directly with AKTIP/FTS, HOOK1 and HOOK3. Associates with several subunits of the homotypic vesicular sorting complex (the HOPS complex) including VPS16 and VPS41; these interactions may be indirect. Interacts with CNTRL. Interacts with microtubules. Interacts with ZC3H14. Interacts with LRGUK (via guanylate kinase-like domain). Interacts with CCDC181. Interacts with AP4M1; the interaction is direct, mediates the interaction between FTS-Hook-FHIP (FHF) complex and AP-4 and the perinuclear distribution of AP-4. In terms of tissue distribution, expressed in brain, cerebellum, kidney, liver and heart, with highest levels in heart and kidney (at protein level).

It is found in the cytoplasm. The protein localises to the cytoskeleton. It localises to the microtubule organizing center. Its subcellular location is the centrosome. The protein resides in the golgi apparatus. It is found in the trans-Golgi network. Functionally, component of the FTS/Hook/FHIP complex (FHF complex). The FHF complex may function to promote vesicle trafficking and/or fusion via the homotypic vesicular protein sorting complex (the HOPS complex). Contributes to the establishment and maintenance of centrosome function. May function in the positioning or formation of aggresomes, which are pericentriolar accumulations of misfolded proteins, proteasomes and chaperones. FHF complex promotes the distribution of AP-4 complex to the perinuclear area of the cell. In Mus musculus (Mouse), this protein is Protein Hook homolog 2 (Hook2).